A 169-amino-acid chain; its full sequence is Superoxide dismutase [Cu-Zn] 1 (169 aa).

The signal sequence occupies residues 1 to 18 (MFEQWDALCAVLFSFSIA). Positions 65, 67, and 83 each coordinate Cu cation. Cysteine 72 and cysteine 165 are joined by a disulfide. Positions 83, 91, 100, and 103 each coordinate Zn(2+). A Cu cation-binding site is contributed by histidine 145.

It belongs to the Cu-Zn superoxide dismutase family. Requires Cu cation as cofactor. It depends on Zn(2+) as a cofactor.

It carries out the reaction 2 superoxide + 2 H(+) = H2O2 + O2. In terms of biological role, destroys radicals which are normally produced within the cells and which are toxic to biological systems. This is Superoxide dismutase [Cu-Zn] 1 (sodC1) from Aquifex aeolicus (strain VF5).